The sequence spans 340 residues: Chorismate mutase 1, chloroplastic (340 aa).

The transit peptide at 1–65 (MEASLLMRSS…KPRSGTSSVH (65 aa)) directs the protein to the chloroplast. Residue Ala66 is modified to N-acetylalanine. Residue Arg79 coordinates L-phenylalanine. Residues 79–340 (RVDESESLTL…QVEYLLRRLD (262 aa)) form the Chorismate mutase domain. L-tyrosine-binding positions include Arg150 and 211–214 (NYGS). An L-phenylalanine-binding site is contributed by 211–214 (NYGS).

In terms of assembly, homodimer. Expressed in roots, shoots, rosette leaves, stems, cauline leaves, flowers and siliques.

The protein localises to the plastid. Its subcellular location is the chloroplast. It catalyses the reaction chorismate = prephenate. It participates in metabolic intermediate biosynthesis; prephenate biosynthesis; prephenate from chorismate: step 1/1. Allosterically inhibited by tyrosine and phenylalanine. Activated by tryptophan. Its function is as follows. May play a role in chloroplast biogenesis. This is Chorismate mutase 1, chloroplastic from Arabidopsis thaliana (Mouse-ear cress).